The primary structure comprises 196 residues: Transmembrane protein 126A (196 aa).

The Mitochondrial matrix segment spans residues methionine 1–glutamate 34. The chain crosses the membrane as a helical span at residues tyrosine 35–phenylalanine 55. Residues arginine 56–arginine 57 are Mitochondrial intermembrane-facing. A helical membrane pass occupies residues isoleucine 58 to leucine 78. Topologically, residues threonine 79–arginine 106 are mitochondrial matrix. The chain crosses the membrane as a helical span at residues glycine 107 to asparagine 127. At glycine 128–lysine 159 the chain is on the mitochondrial intermembrane side. The chain crosses the membrane as a helical span at residues methionine 160 to serine 176. Residues arginine 177–histidine 196 are Mitochondrial matrix-facing.

It belongs to the TMEM126 family. In terms of assembly, interacts with OXA1L; promoting cotranslational quality control in mitochondria. In terms of tissue distribution, in the retina, significant levels of expression are detected in the ganglion cell layer, the optic nerve head, the outer plexiform layer, and in the outer ellipsoide length of photoreceptor inner segments.

The protein localises to the mitochondrion inner membrane. In terms of biological role, protein required for the cotranslational protein quality control in the inner membrane of the mitochondria. Associates with newly synthesized polypeptides and may act as a chaperone that cooperates with OXA1L for the insertion of newly synthesized mitochondrial proteins into the inner membrane. Required for the assembly of the ND4 module of mitochondrial complex I. The polypeptide is Transmembrane protein 126A (Mus musculus (Mouse)).